A 77-amino-acid polypeptide reads, in one-letter code: UPF0401 protein ECP_3853 (77 aa).

Belongs to the UPF0401 family.

The polypeptide is UPF0401 protein ECP_3853 (Escherichia coli O6:K15:H31 (strain 536 / UPEC)).